The sequence spans 399 residues: Protein phosphatase 2C 37 (399 aa).

The PPM-type phosphatase domain occupies 104 to 389; it reads KIGTTSVCGR…DNVSVVVVDL (286 aa). Residues Asp-142 and Gly-143 each coordinate Mn(2+). Positions 146, 148, 208, and 210 each coordinate Zn(2+). The Mn(2+) site is built by Asp-327, Asp-331, and Asp-380.

The protein belongs to the PP2C family. In terms of assembly, interacts with AKT2/AKT3. Interacts with ABA-bounded PYR1, PYL1, PYL2, PYL3, PYL4, PYL9 and PYL12, and with free PYL2, PYL3, PYL4 and PYL13. Binds to and inactivates SLAC1 and SRK2E. The inactivation of SRK2E does not require phosphatase activity. Interacts with CBL1, CBL2, CBL3, CBL5, and CBL7, but not CBL4, CBL6, and CBL9. Interacts with RGLG1 and RGLG5. Interacts with KIN10. It depends on Mg(2+) as a cofactor. The cofactor is Mn(2+). In terms of processing, ubiquitinated by RGLG1 and RGLG5 in response to abscisic acid (ABA). Ubiquitination of PP2CA leads to its degradation by the proteasome. As to expression, mostly expressed in seeds and leaves, and, to a lower extent, in roots, stems, and flowers, particularly in siliques. Essentially found in the phloem.

It catalyses the reaction O-phospho-L-seryl-[protein] + H2O = L-seryl-[protein] + phosphate. It carries out the reaction O-phospho-L-threonyl-[protein] + H2O = L-threonyl-[protein] + phosphate. Its activity is regulated as follows. Repressed by PYR/PYL/RCAR ABA receptors in an ABA-dependent manner. Functionally, major negative regulator of abscisic acid (ABA) responses during seed germination and cold acclimation. Confers insensitivity to ABA. Modulates negatively the AKT2/3 activity, which mediates K(+) transport and membrane polarization during stress situations, probably by dephosphorylation. Prevents stomata closure by inactivating the S-type anion efflux channel SLAC1 and its activator SRK2E. Represses KIN10 activity by the specific dephosphorylation of its T-loop Thr-198, leading to a poststress inactivation of SnRK1 signaling. The polypeptide is Protein phosphatase 2C 37 (PP2CA) (Arabidopsis thaliana (Mouse-ear cress)).